We begin with the raw amino-acid sequence, 339 residues long: Formyl peptide receptor-related sequence 6 (339 aa).

Over 1-23 the chain is Extracellular; that stretch reads MEANFSIPQNGSEVVFYDSTTSR. Residues Asn4 and Asn10 are each glycosylated (N-linked (GlcNAc...) asparagine). The chain crosses the membrane as a helical span at residues 24–44; sequence VICIFLVVVLSITFLLGVIGN. The Cytoplasmic segment spans residues 45–62; the sequence is GLVIYVAGFRMTHTVTTI. A helical transmembrane segment spans residues 63–85; sequence CYLNLALSDFSYMASLPFQITSI. Residues 86-99 are Extracellular-facing; sequence VMNGEWLFGWFLCK. Residues Cys98 and Cys178 are joined by a disulfide bond. Residues 100–120 traverse the membrane as a helical segment; the sequence is FVHMIINVNLFLSIFLITFIA. The Cytoplasmic segment spans residues 121 to 144; the sequence is MDRCICVLHPVWAQNHRTVNVATK. The chain crosses the membrane as a helical span at residues 145-165; that stretch reads VIFGAWILVLMLIFPHCIFVT. At 166–198 the chain is on the extracellular side; the sequence is TVKDESGKVHCICNFESWAATPEEQVKVSMTVS. A helical membrane pass occupies residues 199 to 219; that stretch reads LISVTISFIIGFSIPMIFIVI. The Cytoplasmic portion of the chain corresponds to 220 to 241; the sequence is CYGLMAAKIGRRGFVNSSRPLR. The chain crosses the membrane as a helical span at residues 242–262; that stretch reads VLTAVAISFFVCWFPFQLIFL. The Extracellular portion of the chain corresponds to 263 to 280; it reads LGNIGNKETQNNIDTWVN. Residues 281 to 301 traverse the membrane as a helical segment; it reads TASTLASFNSCLNPILYVFLG. Residues 302-339 are Cytoplasmic-facing; sequence QQFRERLIYSLSASLERALREDSALNSDKTRNLSSQRL.

It belongs to the G-protein coupled receptor 1 family. As to expression, expressed exclusively in vomeronasal tissue. Expressed in 1.2 % of a subset of sensory neurons located in the apical layer of the vomeronasal organ. Each neuron appears to express only one receptor gene. Expressed in brain, spleen, skeletal muscle and at high level in testis.

It is found in the membrane. Its function is as follows. May have an olfactory function associated with the identification of pathogens or of pathogenic states. This chain is Formyl peptide receptor-related sequence 6 (Fpr-rs6), found in Mus musculus (Mouse).